Consider the following 602-residue polypeptide: UvrABC system protein C (602 aa).

The GIY-YIG domain maps to 17–94; sequence TTSGCYKMYS…IKEHKPDYNI (78 aa). Residues 199-234 enclose the UVR domain; sequence SKLLDEIEIKMKEVIKREDFESAIKLKETKRSLIEI.

Belongs to the UvrC family. As to quaternary structure, interacts with UvrB in an incision complex.

Its subcellular location is the cytoplasm. Functionally, the UvrABC repair system catalyzes the recognition and processing of DNA lesions. UvrC both incises the 5' and 3' sides of the lesion. The N-terminal half is responsible for the 3' incision and the C-terminal half is responsible for the 5' incision. The polypeptide is UvrABC system protein C (Borrelia turicatae (strain 91E135)).